Here is a 504-residue protein sequence, read N- to C-terminus: Peroxisome proliferator-activated receptor gamma (504 aa).

Ser111 is subject to Phosphoserine; by MAPK. Positions 135-209 (AIECRVCGDK…VGMSHNAIRF (75 aa)) form a DNA-binding region, nuclear receptor. NR C4-type zinc fingers lie at residues 138–158 (CRVCGDKASGFHYGVHACEGC) and 175–197 (CDLNCRIHKKSRNKCQYCRFQKC). Positions 204–279 (HNAIRFGRMP…DKSPFVIYDM (76 aa)) are interaction with FAM120B. An NR LBD domain is found at 237 to 502 (DLRALAKHLY…HPLLQEIYKD (266 aa)). A Glycyl lysine isopeptide (Lys-Gly) (interchain with G-Cter in ubiquitin) cross-link involves residue Lys251. Residues 494 to 502 (PLLQEIYKD) carry the 9aaTAD motif.

This sequence belongs to the nuclear hormone receptor family. NR1 subfamily. As to quaternary structure, interacts with FOXO1 (acetylated form). Heterodimer with other nuclear receptors, such as RXRA. The heterodimer with the retinoic acid receptor RXRA is called adipocyte-specific transcription factor ARF6. Interacts with NCOA6 coactivator, leading to a strong increase in transcription of target genes. Interacts with coactivator PPARBP, leading to a mild increase in transcription of target genes. Interacts with NOCA7 in a ligand-inducible manner. Interacts with NCOA1 and NCOA2 LXXLL motifs. Interacts with ASXL1, ASXL2, DNTTIP2, FAM120B, MAP2K1/MEK1, NR0B2, PDPK1, PRDM16, PRMT2 and TGFB1I1. Interacts (when activated by agonist) with PPP5C. Interacts with HELZ2 and THRAP3; the interaction stimulates the transcriptional activity of PPARG. Interacts with PER2, the interaction is ligand dependent and blocks PPARG recruitment to target promoters. Interacts with NOCT. Interacts with ACTN4. Interacts (when in the liganded conformation) with GPS2. Interacts with CRY1 and CRY2 in a ligand-dependent manner. In the absence of hormonal ligand, interacts with TACC1. In macrophages, interacts with PAQR3 and STUB1; the interactions promote PPARG poylubiquitination and STUB1-mediated degradation. Post-translationally, phosphorylated at basal conditions and dephosphorylated when treated with the ligand. May be dephosphorylated by PPP5C. The phosphorylated form may be inactive and dephosphorylation induces adipogenic activity. Ubiquitinated by E3 ubiquitin-protein ligase complex containing FBXO9; leading to proteasomal degradation. Ubiquitinated at Lys-251 by TRIM55 leading to proteasomal degradation. Ubiquitinated by E3 ubiquitin-protein ligase STUB1/CHIP; leading to proteasomal degradation. As to expression, highest expression in adipose tissue and lower in spleen. Very low levels in kidney, intestine, lung and muscle.

Its subcellular location is the nucleus. The protein resides in the cytoplasm. PDPK1 activates its transcriptional activity independently of its kinase activity. Functionally, nuclear receptor that binds peroxisome proliferators such as hypolipidemic drugs and fatty acids. Once activated by a ligand, the nuclear receptor binds to DNA specific PPAR response elements (PPRE) and modulates the transcription of its target genes, such as acyl-CoA oxidase. It therefore controls the peroxisomal beta-oxidation pathway of fatty acids. Key regulator of adipocyte differentiation and glucose homeostasis. ARF6 acts as a key regulator of the tissue-specific adipocyte P2 (aP2) enhancer. Acts as a critical regulator of gut homeostasis by suppressing NF-kappa-B-mediated pro-inflammatory responses. Plays a role in the regulation of cardiovascular circadian rhythms by regulating the transcription of BMAL1 in the blood vessels. This chain is Peroxisome proliferator-activated receptor gamma (PPARG), found in Sus scrofa (Pig).